The following is a 420-amino-acid chain: L-glutamine:2-deoxy-scyllo-inosose aminotransferase (420 aa).

At Lys201 the chain carries N6-(pyridoxal phosphate)lysine.

The protein belongs to the DegT/DnrJ/EryC1 family. L-glutamine:2-deoxy-scyllo-inosose/scyllo-inosose aminotransferase subfamily. Requires pyridoxal 5'-phosphate as cofactor.

The enzyme catalyses 2-deoxy-L-scyllo-inosose + L-glutamine = 2-deoxy-scyllo-inosamine + 2-oxoglutaramate. The catalysed reaction is 3-amino-2,3-dideoxy-scyllo-inosose + L-glutamine = 2-deoxystreptamine + 2-oxoglutaramate. It functions in the pathway metabolic intermediate biosynthesis; 2-deoxystreptamine biosynthesis; 2-deoxystreptamine from D-glucose 6-phosphate: step 2/4. Its pathway is antibiotic biosynthesis; gentamicin biosynthesis. Functionally, catalyzes the PLP-dependent transamination of 2-deoxy-scyllo-inosose (2-DOI) to form 2-deoxy-scyllo-inosamine (2-DOIA) using L-glutamine as the amino donor. Also catalyzes the transamination of 3-amino-2,3-dideoxy-scyllo-inosose (keto-2-DOIA) into 2-deoxystreptamine (2-DOS). This Micromonospora echinospora (Micromonospora purpurea) protein is L-glutamine:2-deoxy-scyllo-inosose aminotransferase (gntA).